Reading from the N-terminus, the 177-residue chain is Endoribonuclease YbeY (177 aa).

Zn(2+) contacts are provided by His-118, His-122, and His-128.

It belongs to the endoribonuclease YbeY family. Zn(2+) serves as cofactor.

Its subcellular location is the cytoplasm. Functionally, single strand-specific metallo-endoribonuclease involved in late-stage 70S ribosome quality control and in maturation of the 3' terminus of the 16S rRNA. This Mycolicibacterium paratuberculosis (strain ATCC BAA-968 / K-10) (Mycobacterium paratuberculosis) protein is Endoribonuclease YbeY.